Reading from the N-terminus, the 451-residue chain is Tubulin gamma-1 chain (451 aa).

Ser-131 is subject to Phosphoserine; by BRSK1. 142–148 (AGGTGSG) is a GTP binding site.

This sequence belongs to the tubulin family. In terms of assembly, component of the gamma-tubulin ring complex (gTuRC) consisting of TUBGCP2, TUBGCP3, TUBGCP4, TUBGCP5 and TUBGCP6 and gamma-tubulin TUBG1 or TUBG2. TUBGCP2, TUBGCP3, TUBGCP4, TUBGCP5 and TUBGCP6 assemble in a 5:5:2:1:1 stoichiometry; each is associated with a gamma-tubulin, thereby arranging 14 gamma-tubulins in a helical manner. Gamma-tubulin at the first position is blocked by TUBGCP3 at the last position, allowing 13 protafilaments to grow into a microtubule. The gTuRC (via TUBGCP3 and TUBGCP6) interacts with ACTB and MZT1; the interactions form a luminal bridge that stabilizes the initial structure during complex assembly. The gTuRC (via TUBGCP2) interacts with MZT2A/MZT2B and CDK5RAP2 (via CM1 motif); the interactions play a role in gTuRC activation. Interacts with alpha-beta tubulin heterodimers; the interaction allows microtubules to nucleate from the gTuRC. Interacts with B9D2. Interacts with CDK5RAP2; the interaction is leading to centrosomal localization of TUBG1 and CDK5RAP2. Interacts with CIMAP3. Interacts with SAS6 and NUP62 at the centrosome. Interacts with EML3 (phosphorylated at 'Thr-881') and HAUS8. Interacts with DNM2; this interaction may participate in centrosome cohesion. Interacts with CCDC66. Post-translationally, phosphorylation at Ser-131 by BRSK1 regulates centrosome duplication, possibly by mediating relocation of gamma-tubulin and its associated proteins from the cytoplasm to the centrosome.

The protein localises to the cytoplasm. The protein resides in the cytoskeleton. It is found in the microtubule organizing center. It localises to the centrosome. Its subcellular location is the spindle. Functionally, tubulin is the major constituent of microtubules, protein filaments consisting of alpha- and beta-tubulin heterodimers. Gamma-tubulin is a key component of the gamma-tubulin ring complex (gTuRC) which mediates microtubule nucleation. The gTuRC regulates the minus-end nucleation of alpha-beta tubulin heterodimers that grow into microtubule protafilaments, a critical step in centrosome duplication and spindle formation. The polypeptide is Tubulin gamma-1 chain (Bos taurus (Bovine)).